A 495-amino-acid polypeptide reads, in one-letter code: MTEKPTIAFAKFAAPKKGSVILLVPEGGNLGQAATAADPAGVMPKVFAAAEFKGKLAATVEALAPQGTAYDRVAVIGTGNPSALTEQSWLQIGGAAAAAAKNAGEVTVIADVAGLELSAREAANIGLGILLRSYVFDKYKTRRDENGIKARDKKFTIQCADPNAAKKAFAEASALGDGVYLARDLVNEPANVLGPVEFAAQAKALESLGVKVDVLTEREMKKLGMGALLGVAQGSVRPPRLVVMQWNGGKPKQKPVAFVGKGVVFDTGGISIKPAASMEDMKGDMAGAAAVVGLMHALAARKAKTNAVGIIGLVENMPDGNAQRPGDIVTSMSGQTIEIINTDAEGRLVLADALWYCKEQFKPQFMVNLATLTGAIIVALGNSHAGLFSNDDTLSERLTAAGQATGEKVWRMPLGSEYDKLIDTKNADMKNTGGRQAGSITAAQFLKRFVDDTPWAHLDVAGTAMGSPSSEINQSWASGFGVRLLDRLVADHYEG.

Mn(2+)-binding residues include Lys-261 and Asp-266. The active site involves Lys-273. Mn(2+) contacts are provided by Asp-284, Asp-343, and Glu-345. The active site involves Arg-347.

The protein belongs to the peptidase M17 family. Requires Mn(2+) as cofactor.

Its subcellular location is the cytoplasm. The enzyme catalyses Release of an N-terminal amino acid, Xaa-|-Yaa-, in which Xaa is preferably Leu, but may be other amino acids including Pro although not Arg or Lys, and Yaa may be Pro. Amino acid amides and methyl esters are also readily hydrolyzed, but rates on arylamides are exceedingly low.. The catalysed reaction is Release of an N-terminal amino acid, preferentially leucine, but not glutamic or aspartic acids.. Presumably involved in the processing and regular turnover of intracellular proteins. Catalyzes the removal of unsubstituted N-terminal amino acids from various peptides. This is Probable cytosol aminopeptidase from Chelativorans sp. (strain BNC1).